A 491-amino-acid chain; its full sequence is UDP-N-acetylmuramoyl-L-alanyl-D-glutamate--2,6-diaminopimelate ligase (491 aa).

Position 30 (S30) interacts with UDP-N-acetyl-alpha-D-muramoyl-L-alanyl-D-glutamate. G108–T114 contributes to the ATP binding site. Residues N149, T150–T151, S177, Q183, and R185 each bind UDP-N-acetyl-alpha-D-muramoyl-L-alanyl-D-glutamate. K217 carries the post-translational modification N6-carboxylysine. Residues R383, D407–R410, G458, and E462 each bind meso-2,6-diaminopimelate. A Meso-diaminopimelate recognition motif motif is present at residues D407 to R410.

This sequence belongs to the MurCDEF family. MurE subfamily. Mg(2+) is required as a cofactor. In terms of processing, carboxylation is probably crucial for Mg(2+) binding and, consequently, for the gamma-phosphate positioning of ATP.

It localises to the cytoplasm. The enzyme catalyses UDP-N-acetyl-alpha-D-muramoyl-L-alanyl-D-glutamate + meso-2,6-diaminopimelate + ATP = UDP-N-acetyl-alpha-D-muramoyl-L-alanyl-gamma-D-glutamyl-meso-2,6-diaminopimelate + ADP + phosphate + H(+). It participates in cell wall biogenesis; peptidoglycan biosynthesis. In terms of biological role, catalyzes the addition of meso-diaminopimelic acid to the nucleotide precursor UDP-N-acetylmuramoyl-L-alanyl-D-glutamate (UMAG) in the biosynthesis of bacterial cell-wall peptidoglycan. This chain is UDP-N-acetylmuramoyl-L-alanyl-D-glutamate--2,6-diaminopimelate ligase, found in Listeria monocytogenes serovar 1/2a (strain ATCC BAA-679 / EGD-e).